Reading from the N-terminus, the 209-residue chain is COP9 signalosome complex subunit 8 (209 aa).

Positions 8–179 constitute a PCI domain; it reads ESAFSFKKLL…GALDVSFNKF (172 aa). Ser-175 carries the post-translational modification Phosphoserine.

Belongs to the CSN8 family. As to quaternary structure, component of the CSN complex, composed of COPS1/GPS1, COPS2, COPS3, COPS4, COPS5, COPS6, COPS7 (COPS7A or COPS7B), COPS8 and COPS9 isoform 1. In the complex, it probably interacts directly with COPS3, COPS4 and COPS7 (COPS7A or COPS7B).

It localises to the cytoplasm. The protein resides in the nucleus. In terms of biological role, component of the COP9 signalosome complex (CSN), a complex involved in various cellular and developmental processes. The CSN complex is an essential regulator of the ubiquitin (Ubl) conjugation pathway by mediating the deneddylation of the cullin subunits of SCF-type E3 ligase complexes, leading to decrease the Ubl ligase activity of SCF-type complexes such as SCF, CSA or DDB2. The complex is also involved in phosphorylation of p53/TP53, c-jun/JUN, IkappaBalpha/NFKBIA, ITPK1 and IRF8/ICSBP, possibly via its association with CK2 and PKD kinases. CSN-dependent phosphorylation of TP53 and JUN promotes and protects degradation by the Ubl system, respectively. This Homo sapiens (Human) protein is COP9 signalosome complex subunit 8 (COPS8).